We begin with the raw amino-acid sequence, 96 residues long: Small ribosomal subunit protein bS18 (96 aa).

Residues 1 to 20 (MSHGGKRRSGDGGSEGSSYS) form a disordered region.

The protein belongs to the bacterial ribosomal protein bS18 family. Part of the 30S ribosomal subunit. Forms a tight heterodimer with protein bS6.

Functionally, binds as a heterodimer with protein bS6 to the central domain of the 16S rRNA, where it helps stabilize the platform of the 30S subunit. This chain is Small ribosomal subunit protein bS18, found in Anaplasma phagocytophilum (strain HZ).